We begin with the raw amino-acid sequence, 445 residues long: Tubulin beta chain (445 aa).

GTP is bound by residues Gln11, Glu69, Ser138, Gly142, Thr143, Gly144, Asn204, and Asn226. Mg(2+) is bound at residue Glu69. Residues 426–445 (QDATAEEEGEFEEEEGDVEA) are disordered. The span at 429 to 445 (TAEEEGEFEEEEGDVEA) shows a compositional bias: acidic residues.

This sequence belongs to the tubulin family. In terms of assembly, dimer of alpha and beta chains. A typical microtubule is a hollow water-filled tube with an outer diameter of 25 nm and an inner diameter of 15 nM. Alpha-beta heterodimers associate head-to-tail to form protofilaments running lengthwise along the microtubule wall with the beta-tubulin subunit facing the microtubule plus end conferring a structural polarity. Microtubules usually have 13 protofilaments but different protofilament numbers can be found in some organisms and specialized cells. Interacts with DCX/apicortin; the interaction stabilizes microtubule assembly. Mg(2+) serves as cofactor.

Its subcellular location is the cytoplasm. It localises to the cytoskeleton. Functionally, tubulin is the major constituent of microtubules, a cylinder consisting of laterally associated linear protofilaments composed of alpha- and beta-tubulin heterodimers. Microtubules grow by the addition of GTP-tubulin dimers to the microtubule end, where a stabilizing cap forms. Below the cap, tubulin dimers are in GDP-bound state, owing to GTPase activity of alpha-tubulin. The sequence is that of Tubulin beta chain from Plasmodium falciparum.